The following is a 159-amino-acid chain: 2-C-methyl-D-erythritol 2,4-cyclodiphosphate synthase (159 aa).

The a divalent metal cation site is built by Asp-10 and His-12. 4-CDP-2-C-methyl-D-erythritol 2-phosphate is bound by residues 10-12 and 36-37; these read DVH and HS. His-44 is a binding site for a divalent metal cation. 4-CDP-2-C-methyl-D-erythritol 2-phosphate is bound by residues 58–60, 134–137, Phe-141, and Arg-144; these read DIG and TTTE.

Belongs to the IspF family. In terms of assembly, homotrimer. Requires a divalent metal cation as cofactor.

It catalyses the reaction 4-CDP-2-C-methyl-D-erythritol 2-phosphate = 2-C-methyl-D-erythritol 2,4-cyclic diphosphate + CMP. It participates in isoprenoid biosynthesis; isopentenyl diphosphate biosynthesis via DXP pathway; isopentenyl diphosphate from 1-deoxy-D-xylulose 5-phosphate: step 4/6. Its function is as follows. Involved in the biosynthesis of isopentenyl diphosphate (IPP) and dimethylallyl diphosphate (DMAPP), two major building blocks of isoprenoid compounds. Catalyzes the conversion of 4-diphosphocytidyl-2-C-methyl-D-erythritol 2-phosphate (CDP-ME2P) to 2-C-methyl-D-erythritol 2,4-cyclodiphosphate (ME-CPP) with a corresponding release of cytidine 5-monophosphate (CMP). In Bacteroides fragilis (strain YCH46), this protein is 2-C-methyl-D-erythritol 2,4-cyclodiphosphate synthase.